The chain runs to 851 residues: DNA mismatch repair protein MutS (851 aa).

Residue 602–609 participates in ATP binding; the sequence is GPNMSGKS.

Belongs to the DNA mismatch repair MutS family.

In terms of biological role, this protein is involved in the repair of mismatches in DNA. It is possible that it carries out the mismatch recognition step. This protein has a weak ATPase activity. This is DNA mismatch repair protein MutS from Streptococcus equi subsp. equi (strain 4047).